We begin with the raw amino-acid sequence, 368 residues long: MAPRTLLLLLAAALAPTQTRAGPHSLRYFVTAVSRPGLGKPRYMEVGYVDNTEFVRFDSDAENPRMKPRVRWMEQEGPEYWEQETQNAKDHEQSFRVSLRNLLGYYNQSKGGSHTIQGMRGCDVGSDWRLLRGYEQFAYDGPDYIALNEDLKTWTAADMAAQITRRKWEQAGAAETLRAYLEGACVEWLRRYLELGNATLLCTDPPKAHVTHHPRSEGKVTLRCWALGFYPADITLTWQLNGEELTQDMELVETRPAGDGTFQKWAALVVPLGKEQNYTCHVEHEGLPEPLTLRWEPPPSTDSYMVIVAVLVVLGAVFIIGAVVAFVMMMRRNTGGKGGDYTLAPGSQSSEMSLRDCKVMVHDSHSLA.

A signal peptide spans 1-21; sequence MAPRTLLLLLAAALAPTQTRA. Residues 22-111 are alpha-1; sequence GPHSLRYFVT…LLGYYNQSKG (90 aa). Topologically, residues 22-303 are extracellular; that stretch reads GPHSLRYFVT…RWEPPPSTDS (282 aa). N107 carries an N-linked (GlcNAc...) asparagine glycan. An alpha-2 region spans residues 112-203; the sequence is GSHTIQGMRG…ELGNATLLCT (92 aa). The cysteines at positions 122 and 185 are disulfide-linked. N197 and N277 each carry an N-linked (GlcNAc...) asparagine glycan. Residues 204–295 are alpha-3; sequence DPPKAHVTHH…GLPEPLTLRW (92 aa). An Ig-like C1-type domain is found at 206 to 294; it reads PKAHVTHHPR…EGLPEPLTLR (89 aa). An intrachain disulfide couples C224 to C280. Positions 296–303 are connecting peptide; it reads EPPPSTDS. Residues 304–330 form a helical membrane-spanning segment; that stretch reads YMVIVAVLVVLGAVFIIGAVVAFVMMM. At 331 to 368 the chain is on the cytoplasmic side; sequence RRNTGGKGGDYTLAPGSQSSEMSLRDCKVMVHDSHSLA. S350 and S353 each carry phosphoserine.

Belongs to the MHC class I family. Heterodimer of an alpha chain and a beta chain (beta-2-microglobulin).

It localises to the membrane. In terms of biological role, involved in the presentation of foreign antigens to the immune system. The protein is H-2 class I histocompatibility antigen, D-P alpha chain (H2-D1) of Mus musculus (Mouse).